Here is a 170-residue protein sequence, read N- to C-terminus: Adenine phosphoribosyltransferase (170 aa).

It belongs to the purine/pyrimidine phosphoribosyltransferase family. As to quaternary structure, homodimer.

The protein localises to the cytoplasm. It carries out the reaction AMP + diphosphate = 5-phospho-alpha-D-ribose 1-diphosphate + adenine. It participates in purine metabolism; AMP biosynthesis via salvage pathway; AMP from adenine: step 1/1. Catalyzes a salvage reaction resulting in the formation of AMP, that is energically less costly than de novo synthesis. The chain is Adenine phosphoribosyltransferase from Streptococcus suis (strain 98HAH33).